The primary structure comprises 567 residues: Oxygen-dependent choline dehydrogenase (567 aa).

4 to 33 provides a ligand contact to FAD; sequence DYIIIGAGSAGNVLAARLTEDADVTVLLLE. Catalysis depends on His473, which acts as the Proton acceptor.

This sequence belongs to the GMC oxidoreductase family. The cofactor is FAD.

The enzyme catalyses choline + A = betaine aldehyde + AH2. It catalyses the reaction betaine aldehyde + NAD(+) + H2O = glycine betaine + NADH + 2 H(+). It participates in amine and polyamine biosynthesis; betaine biosynthesis via choline pathway; betaine aldehyde from choline (cytochrome c reductase route): step 1/1. In terms of biological role, involved in the biosynthesis of the osmoprotectant glycine betaine. Catalyzes the oxidation of choline to betaine aldehyde and betaine aldehyde to glycine betaine at the same rate. The sequence is that of Oxygen-dependent choline dehydrogenase from Yersinia pestis (strain Pestoides F).